The following is a 179-amino-acid chain: Ubiquitin-conjugating enzyme E2 C (179 aa).

The tract at residues 1–31 is disordered; that stretch reads MASQNRDPAATSVAAARKGAEPSGGAARGPV. A2 bears the N-acetylalanine mark. S3 is subject to Phosphoserine. The region spanning 30 to 175 is the UBC core domain; it reads PVGKRLQQEL…LQETYSKQVT (146 aa). The active-site Glycyl thioester intermediate is the C114.

Belongs to the ubiquitin-conjugating enzyme family. As to quaternary structure, component of the APC/C complex, composed of at least 14 distinct subunits that assemble into a complex of at least 19 chains with a combined molecular mass of around 1.2 MDa. Within this complex, directly interacts with ANAPC2. Autoubiquitinated by the APC/C complex, leading to its degradation by the proteasome. Its degradation plays a central role in APC/C regulation, allowing cyclin-A accumulation before S phase entry. APC/C substrates inhibit the autoubiquitination of UBE2C/UBCH10 but not its E2 function, hence APC/C remaining active until its substrates have been destroyed.

The catalysed reaction is S-ubiquitinyl-[E1 ubiquitin-activating enzyme]-L-cysteine + [E2 ubiquitin-conjugating enzyme]-L-cysteine = [E1 ubiquitin-activating enzyme]-L-cysteine + S-ubiquitinyl-[E2 ubiquitin-conjugating enzyme]-L-cysteine.. It carries out the reaction S-ubiquitinyl-[E1 ubiquitin-activating enzyme]-L-cysteine + [acceptor protein]-L-lysine = [E1 ubiquitin-activating enzyme]-L-cysteine + N(6)-monoubiquitinyl-[acceptor protein]-L-lysine.. Its pathway is protein modification; protein ubiquitination. Functionally, accepts ubiquitin from the E1 complex and catalyzes its covalent attachment to other proteins. In vitro catalyzes 'Lys-11'- and 'Lys-48'-linked polyubiquitination. Acts as an essential factor of the anaphase promoting complex/cyclosome (APC/C), a cell cycle-regulated ubiquitin ligase that controls progression through mitosis. Acts by initiating 'Lys-11'-linked polyubiquitin chains on APC/C substrates, leading to the degradation of APC/C substrates by the proteasome and promoting mitotic exit. In Homo sapiens (Human), this protein is Ubiquitin-conjugating enzyme E2 C (UBE2C).